The following is a 217-amino-acid chain: tRNA (guanine-N(7)-)-methyltransferase (217 aa).

S-adenosyl-L-methionine is bound by residues E48, E73, N100, and D123. D123 is a catalytic residue. K127 and D159 together coordinate substrate.

Belongs to the class I-like SAM-binding methyltransferase superfamily. TrmB family.

The catalysed reaction is guanosine(46) in tRNA + S-adenosyl-L-methionine = N(7)-methylguanosine(46) in tRNA + S-adenosyl-L-homocysteine. It participates in tRNA modification; N(7)-methylguanine-tRNA biosynthesis. In terms of biological role, catalyzes the formation of N(7)-methylguanine at position 46 (m7G46) in tRNA. This chain is tRNA (guanine-N(7)-)-methyltransferase, found in Leptospira interrogans serogroup Icterohaemorrhagiae serovar copenhageni (strain Fiocruz L1-130).